The chain runs to 306 residues: Uricase (306 aa).

Catalysis depends on charge relay system residues K5 and T65. 7 residues coordinate urate: T65, D66, F175, R192, I240, Q241, and N267. The segment at 281–306 is disordered; it reads AKVLREPPRPTGYQQFSMDRSDLEEQ.

Belongs to the uricase family.

The enzyme catalyses urate + O2 + H2O = 5-hydroxyisourate + H2O2. The protein operates within purine metabolism; urate degradation; (S)-allantoin from urate: step 1/3. Catalyzes the oxidation of uric acid to 5-hydroxyisourate, which is further processed to form (S)-allantoin. This chain is Uricase, found in Halalkalicoccus jeotgali (strain DSM 18796 / CECT 7217 / JCM 14584 / KCTC 4019 / B3).